The sequence spans 142 residues: Tail assembly protein E' (142 aa).

It belongs to the mulikevirus tail assembly protein family.

Promotes tail assembly by creating a scaffold for the tail tube proteins. Tail assembly proteins E and E' would wrap the linear tape measure protein to create a tail assembly scaffold. The polypeptide is Tail assembly protein E' (Enterobacteriaceae (Bacteriophage P2)).